A 101-amino-acid polypeptide reads, in one-letter code: Putative metal transport protein HQ_3622A (101 aa).

Residues 1 to 32 (MKIISMSMDSWIQRAALMLLGLVIVAPFFGWT) form the signal peptide. Residues 75-95 (IGTLISAGVGTVLTLIVAFGA) traverse the membrane as a helical segment.

Its subcellular location is the cell membrane. Its function is as follows. May be involved in metal transport. This Haloquadratum walsbyi (strain DSM 16790 / HBSQ001) protein is Putative metal transport protein HQ_3622A.